Consider the following 125-residue polypeptide: Aldolase FrzH (125 aa).

It carries out the reaction (2S)-3-(4-methoxyphenyl)-2-[(3S)-3-(methylamino)-8-oxo-1-azaspiro[4.5]decan-1-yl]propanal = (1S,3S,6S,7S,8R)-7-hydroxy-6-[(4-methoxyphenyl)methyl]-3-(methylamino)-5-azatricyclo[6.3.1.0(1,5)]dodecan-9-one. Its pathway is secondary metabolite biosynthesis. In terms of biological role, aldolase; part of the gene cluster that mediates the biosynthesis of the alkaloid (-)-FR901483, a potent immunosuppressant that shows efficacy in animal models and a probable inhibitor of purine nucleotide biosynthesis by targeting phosphoribosylpyrophosphate amidotransferase (PPAT). Within the pathway, FrzH is a new kind of aldolase with no similarities to known aldolases, and which catalyzes the intramolecular aldol condensation via formation of a C9-C3' bond to yield an aza-tricyclic product. The biosynthesis of (-)-FR901483 starts with the condensation of two L-tyrosines to yield (S,S)-dityrosyl-piperazine. This process occurs in 3 steps with the non-canonical nonribosomal peptide synthetase FrzA catalyzing the reduction of L-tyrosine into L-tyrosinal, the spontaneous condensation of 2 L-tyrosinal units, and the subsequent reduction by the NmrA-like family domain-containing oxidoreductase FrzB. The cytochrome P450 monooxygenase FrzC then performs coupling between N10 and C1' to morph the piperazine into a 1,4-diazabicyclo[3.2.1]octane spiro-fused to a 2,5-cyclohexadienone. The dienone portion is further reduced to cyclohexanone by the flavin-dependent reductase FrzD. The methyltranserases (MTs) FrzE and FrzF are then involved in the methylation at the C10' amine and the C4 phenolic oxygen, respectively. The order of the two MTs appear to be interchangeable. Cleavage of the C9-N10' bond by the dioxygenase FrzG then leads to formation of a conjugated iminium. In addition to the oxidation of C9, an additional dehydrogenation between C7 and C8 can occur to give a likely shunt product. The next biosynthetic step is the intramolecular aldol condensation catalyzed by the newly identified aldolase FrzH to yield an aza-tricyclic product with the formation of a C9-C3' bond. The short-chain dehydrogenase/reductase FrzI then produces dephospho-(-)-FR901483 that is phosphorylated at C4'-OH into (-)-FR901483 by the phosphotransferase FrzJ. This Cladobotryum sp protein is Aldolase FrzH.